Consider the following 293-residue polypeptide: 33 kDa chaperonin (293 aa).

2 cysteine pairs are disulfide-bonded: Cys238–Cys240 and Cys271–Cys274.

This sequence belongs to the HSP33 family. Post-translationally, under oxidizing conditions two disulfide bonds are formed involving the reactive cysteines. Under reducing conditions zinc is bound to the reactive cysteines and the protein is inactive.

Its subcellular location is the cytoplasm. Functionally, redox regulated molecular chaperone. Protects both thermally unfolding and oxidatively damaged proteins from irreversible aggregation. Plays an important role in the bacterial defense system toward oxidative stress. This chain is 33 kDa chaperonin, found in Staphylococcus aureus (strain Mu3 / ATCC 700698).